Reading from the N-terminus, the 406-residue chain is Zinc finger protein 793 (406 aa).

One can recognise a KRAB domain in the interval 8–79 (VSFKDVVVGF…EAACPGCHCW (72 aa)). C2H2-type zinc fingers lie at residues 227–249 (HVCSECGKAFCYKSEFIRHQRSH), 255–277 (YGCTDCGKAFSHKSTLIKHQRIH), 283–305 (FECFFCGKAFTQKSHRTEHQRTH), 311–333 (FVCSECGKSFGEKSYLNVHRKMH), 339–361 (YRCRECGKSFSQKSCLNKHWRTH), and 367–389 (YGCNECGKAFYQKPNLSRHQKIH).

This sequence belongs to the krueppel C2H2-type zinc-finger protein family.

Its subcellular location is the nucleus. Functionally, may be involved in transcriptional regulation. In Homo sapiens (Human), this protein is Zinc finger protein 793 (ZNF793).